The sequence spans 379 residues: Glucose-insensitive transcription protein 7 (379 aa).

The 92-residue stretch at 181-272 (SNRIRYDWSQ…VSEIKWEALV (92 aa)) folds into the CS domain. The SGS domain maps to 292-379 (ASGNTKNKAK…PPQGMEPKKF (88 aa)). Residues 345 to 379 (SYTESNGTALSTNWKDVKSKTFETKPPQGMEPKKF) form a disordered region. Positions 346–358 (YTESNGTALSTNW) are enriched in polar residues.

Functionally, involved in cyclic AMP (cAMP) pathway, possibly by participating in the assembly or the conformational activation of specific multiprotein complexes. The sequence is that of Glucose-insensitive transcription protein 7 (git7) from Schizosaccharomyces pombe (strain 972 / ATCC 24843) (Fission yeast).